The following is a 597-amino-acid chain: Gamma-terpinene synthase, chloroplastic (597 aa).

The transit peptide at 1–47 directs the protein to the chloroplast; it reads MATLSMQVSILNKQLKNLNSFGMRASKLPLVARRVDVSTTRLRPICS. Mn(2+) is bound by residues Asp-350 and Asp-354. The DDXXD motif motif lies at 350–354; that stretch reads DDVYD. 2 homodimerization regions span residues 356–362 and 428–464; these read YGTLDEL and EAKW…YFTL. 2 residues coordinate Mn(2+): Asp-494 and Glu-502.

The protein belongs to the terpene synthase family. In terms of assembly, homodimer. It depends on Mn(2+) as a cofactor. Mg(2+) is required as a cofactor.

It localises to the plastid. It is found in the chloroplast. It catalyses the reaction (2E)-geranyl diphosphate = gamma-terpinene + diphosphate. It participates in secondary metabolite biosynthesis; terpenoid biosynthesis. Involved in the biosynthesis of phenolic monoterpenes natural products thymol and carvacrol which have a broad range of biological activities acting as antimicrobial compounds, insecticides, antioxidants and pharmaceutical agents. Monoterpene synthase which catalyzes the conversion of geranyl diphosphate (GPP) to gamma-terpinene and minor amounts of other monoterpenes (e.g. alpha-thujene, alpha-terpinene, myrcene, sabinene, (+)-R-limonene, alpha-pinene and alpha-phellandrene). The protein is Gamma-terpinene synthase, chloroplastic of Thymus caespititius (Cretan thyme).